We begin with the raw amino-acid sequence, 72 residues long: DNA-directed RNA polymerase subunit omega (72 aa).

It belongs to the RNA polymerase subunit omega family. As to quaternary structure, the RNAP catalytic core consists of 2 alpha, 1 beta, 1 beta' and 1 omega subunit. When a sigma factor is associated with the core the holoenzyme is formed, which can initiate transcription.

It carries out the reaction RNA(n) + a ribonucleoside 5'-triphosphate = RNA(n+1) + diphosphate. Promotes RNA polymerase assembly. Latches the N- and C-terminal regions of the beta' subunit thereby facilitating its interaction with the beta and alpha subunits. This chain is DNA-directed RNA polymerase subunit omega, found in Lactobacillus johnsonii (strain CNCM I-12250 / La1 / NCC 533).